Here is a 1151-residue protein sequence, read N- to C-terminus: Trafficking protein particle complex subunit 9 (1151 aa).

This sequence belongs to the NIBP family. In terms of assembly, part of the multisubunit TRAPP (transport protein particle) complex.

The protein localises to the golgi apparatus. It localises to the cis-Golgi network. Its subcellular location is the endoplasmic reticulum. The protein resides in the cytoplasm. Functionally, functions as an activator of NF-kappa-B through increased phosphorylation of the IKK complex. May function in neuronal cells differentiation. May play a role in vesicular transport from endoplasmic reticulum to Golgi. This is Trafficking protein particle complex subunit 9 (trappc9) from Xenopus laevis (African clawed frog).